A 342-amino-acid polypeptide reads, in one-letter code: Type II restriction enzyme CviAII (342 aa).

It catalyses the reaction Endonucleolytic cleavage of DNA to give specific double-stranded fragments with terminal 5'-phosphates.. Functionally, a P subtype restriction enzyme that recognizes the double-stranded sequence 5'-CATG-3' and cleaves after C-1. The polypeptide is Type II restriction enzyme CviAII (CVIAIIR) (Chlorella (PBCV-1)).